A 169-amino-acid polypeptide reads, in one-letter code: Cell division inhibitor SulA (169 aa).

A disordered region spans residues 1–22; that stretch reads MHTSIYANRSTSFSPSAGNDTQ. The interval 106–112 is ftsZ binding; it reads ALRTGNY. The segment at 162–169 is lon protease binding; that stretch reads KIHSNLYH.

The protein belongs to the SulA family. Interacts with FtsZ. Post-translationally, is rapidly cleaved and degraded by the Lon protease once DNA damage is repaired.

Functionally, component of the SOS system and an inhibitor of cell division. Accumulation of SulA causes rapid cessation of cell division and the appearance of long, non-septate filaments. In the presence of GTP, binds a polymerization-competent form of FtsZ in a 1:1 ratio, thus inhibiting FtsZ polymerization and therefore preventing it from participating in the assembly of the Z ring. This mechanism prevents the premature segregation of damaged DNA to daughter cells during cell division. This Enterobacter sp. (strain 638) protein is Cell division inhibitor SulA.